The primary structure comprises 587 residues: Pyruvate decarboxylase 3 (587 aa).

Positions 48 and 135 each coordinate substrate. Residues 415–496 are thiamine pyrophosphate binding; it reads DSWFNCQKLR…FLINNGGYTI (82 aa). 3 residues coordinate Mg(2+): Asp-464, Asn-491, and Gly-493. Glu-497 provides a ligand contact to substrate.

The protein belongs to the TPP enzyme family. In terms of assembly, homotetramer. Requires a metal cation as cofactor. It depends on thiamine diphosphate as a cofactor.

The catalysed reaction is a 2-oxocarboxylate + H(+) = an aldehyde + CO2. The protein is Pyruvate decarboxylase 3 (PDC3) of Oryza sativa subsp. japonica (Rice).